Consider the following 493-residue polypeptide: Occludin (493 aa).

The Cytoplasmic segment spans residues 1 to 47 (MYSRPSNYAPSKDVYGGEMRSQPAYSYYPEEEIQHFYRWSSPPGIIK). One can recognise an MARVEL domain in the interval 41 to 250 (SPPGIIKIMS…IIFFAVKTRK (210 aa)). A helical transmembrane segment spans residues 48-70 (IMSILIVVMCVGIFACVASTLPW). Residues 71-116 (DLDITGQSMGYGMGSGSYSGGYTGYGFGGSQMGLGFAYGGNYTDPR) are Extracellular-facing. Residues 117–141 (AAKGFILAMAAFCFIIGLVIFVMLV) traverse the membrane as a helical segment. Topologically, residues 142–151 (TRTPLSTSRK) are cytoplasmic. A helical transmembrane segment spans residues 152–176 (FYLIVIIVSAIIGGLVFIATIVYTV). Over 177–224 (GVNPVAQASGSAFYTQIVSICNQFYSPVQTGVFVNQYLYHYCVVEPQE) the chain is Extracellular. A disulfide bond links C197 and C218. Residues 225 to 246 (AIAIVLGFLIVVAFAIIIFFAV) traverse the membrane as a helical segment. Residues 247–493 (KTRKKINQYG…IKQMVSNYDK (247 aa)) lie on the Cytoplasmic side of the membrane. Positions 334–407 (YGMSPRHYSS…TKQRQEYKQE (74 aa)) are disordered. Basic residues predominate over residues 352 to 361 (APPKKRPGKP). The residue at position 375 (T375) is a Phosphothreonine; by CK2; in vitro. Residue S379 is modified to Phosphoserine; by CK2; in vitro. Positions 379–389 (SADELEDDSWD) are enriched in acidic residues. An OCEL domain is found at 386–493 (DSWDSEYPPI…IKQMVSNYDK (108 aa)). Residues 396–428 (TQTKQRQEYKQEFASDLHEYKRLQAELDELSKI) adopt a coiled-coil conformation.

The protein belongs to the ELL/occludin family. As to quaternary structure, interacts in vitro with cingulin, possibly directly. Interacts with ZO-1. In terms of processing, phosphorylated. In terms of tissue distribution, localized at tight junctions of both epithelial and endothelial cells.

Its subcellular location is the cell membrane. It is found in the cell junction. The protein localises to the tight junction. Functionally, probably plays a role in the formation and regulation of the tight junction (TJ) paracellular permeability barrier. The chain is Occludin (ocln) from Xenopus laevis (African clawed frog).